The sequence spans 221 residues: Eukaryotic translation initiation factor NCBP (221 aa).

The protein belongs to the eukaryotic initiation factor 4E family. In terms of assembly, EIF4F is a multi-subunit complex, the composition of which varies with external and internal environmental conditions. It is composed of at least EIF4A, EIF4E and EIF4G. EIF4E is also known to interact with other partners. In higher plants two isoforms of EIF4F have been identified, named isoform EIF4F and isoform EIF(iso)4F. Isoform EIF4F has subunits p220 and p26, whereas isoform EIF(iso)4F has subunits p82 and p28.

Functionally, recognizes and binds the 7-methylguanosine-containing mRNA cap during an early step in the initiation of protein synthesis and facilitates ribosome binding by inducing the unwinding of the mRNAs secondary structures. This Arabidopsis thaliana (Mouse-ear cress) protein is Eukaryotic translation initiation factor NCBP (NCBP).